The sequence spans 217 residues: Imidazole glycerol phosphate synthase subunit HisH (217 aa).

Positions Arg5–Leu217 constitute a Glutamine amidotransferase type-1 domain. The Nucleophile role is filled by Cys93. Active-site residues include His199 and Glu201.

As to quaternary structure, heterodimer of HisH and HisF.

It localises to the cytoplasm. It carries out the reaction 5-[(5-phospho-1-deoxy-D-ribulos-1-ylimino)methylamino]-1-(5-phospho-beta-D-ribosyl)imidazole-4-carboxamide + L-glutamine = D-erythro-1-(imidazol-4-yl)glycerol 3-phosphate + 5-amino-1-(5-phospho-beta-D-ribosyl)imidazole-4-carboxamide + L-glutamate + H(+). The catalysed reaction is L-glutamine + H2O = L-glutamate + NH4(+). It participates in amino-acid biosynthesis; L-histidine biosynthesis; L-histidine from 5-phospho-alpha-D-ribose 1-diphosphate: step 5/9. IGPS catalyzes the conversion of PRFAR and glutamine to IGP, AICAR and glutamate. The HisH subunit catalyzes the hydrolysis of glutamine to glutamate and ammonia as part of the synthesis of IGP and AICAR. The resulting ammonia molecule is channeled to the active site of HisF. In Helicobacter hepaticus (strain ATCC 51449 / 3B1), this protein is Imidazole glycerol phosphate synthase subunit HisH.